A 385-amino-acid polypeptide reads, in one-letter code: Signal transduction histidine-protein kinase/phosphatase DegS (385 aa).

A coiled-coil region spans residues Gln-31 to Gln-141. Residue Ser-76 is modified to Phosphoserine. Positions Arg-183–Leu-385 constitute a Histidine kinase domain. His-189 carries the post-translational modification Phosphohistidine; by autocatalysis.

Post-translationally, autophosphorylated. Phosphorylated in vitro at Ser-76 by the serine/threonine-protein kinase YbdM, which stimulates the phosphate transfer to DegU.

Its subcellular location is the cytoplasm. The catalysed reaction is ATP + protein L-histidine = ADP + protein N-phospho-L-histidine.. Its activity is regulated as follows. Regulated via serine phosphorylation of its input domain. Phosphotransfer from DegS to DegU is stimulated by phosphorylation on Ser-76 and by DegQ. Functionally, member of the two-component regulatory system DegS/DegU, which plays an important role in the transition growth phase. Involved in the control of expression of different cellular functions, including production of degradative enzymes such as the neutral and alkaline proteases, flagellum formation and biofilm formation. Acts both as a protein kinase that undergoes autophosphorylation and subsequently transfers the phosphate to DegU, and as a protein phosphatase that dephosphorylates phospho-DegU. The protein is Signal transduction histidine-protein kinase/phosphatase DegS (degS) of Bacillus subtilis (strain 168).